The following is a 92-amino-acid chain: MSVLTVPRQTPRQRLPVLPCHVGDPDLWFADTPAGLEVAKTLCVSCPIRRQCLAAALQRAEPWGVWGGEIFDQGSIVSHKRPRGRPRKDAVA.

The 4Fe-4S Wbl-type domain occupies 19-76 (PCHVGDPDLWFADTPAGLEVAKTLCVSCPIRRQCLAAALQRAEPWGVWGGEIFDQGSI). Positions 20, 43, 46, and 52 each coordinate [4Fe-4S] cluster. A DNA-binding region (a.T hook) is located at residues 80–91 (KRPRGRPRKDAV).

The protein belongs to the WhiB family. It depends on [4Fe-4S] cluster as a cofactor. Post-translationally, the Fe-S cluster can be nitrosylated by nitric oxide (NO). Upon Fe-S cluster removal intramolecular disulfide bonds are formed.

The protein resides in the cytoplasm. Functionally, the apo- but not holo-form probably binds DNA. Acts as a transcriptional regulator. Probably redox-responsive. Upon overproduction at least 10 other genes are up-regulated, among them are Rv1258c, Rv1988, Rv2301, Rv2416c, Rv2725c and whiB7 itself. Probably redox-responsive. The apo-form has been shown to act as a protein disulfide reductase. This Mycobacterium tuberculosis (strain ATCC 25618 / H37Rv) protein is Probable transcriptional regulator WhiB7 (whiB7).